Here is a 190-residue protein sequence, read N- to C-terminus: Protein GrpE (190 aa).

This sequence belongs to the GrpE family. Homodimer.

The protein resides in the cytoplasm. Functionally, participates actively in the response to hyperosmotic and heat shock by preventing the aggregation of stress-denatured proteins, in association with DnaK and GrpE. It is the nucleotide exchange factor for DnaK and may function as a thermosensor. Unfolded proteins bind initially to DnaJ; upon interaction with the DnaJ-bound protein, DnaK hydrolyzes its bound ATP, resulting in the formation of a stable complex. GrpE releases ADP from DnaK; ATP binding to DnaK triggers the release of the substrate protein, thus completing the reaction cycle. Several rounds of ATP-dependent interactions between DnaJ, DnaK and GrpE are required for fully efficient folding. This chain is Protein GrpE, found in Streptococcus agalactiae serotype III (strain NEM316).